The chain runs to 532 residues: Maternal protein exuperantia (532 aa).

2 disordered regions span residues 206–251 and 403–491; these read CSAS…NAVQ and TVKP…NGLK. 2 stretches are compositionally biased toward low complexity: residues 220–231 and 404–417; these read GSSMVSDSVSIS and VKPV…NNNN. Residues 454–467 are compositionally biased toward polar residues; that stretch reads SVSSLPDSTTKTPS. Serine 467 is subject to Phosphoserine.

In terms of assembly, component of the osk RNP complex, which is composed of at least exuperantia (exu), ypsilon schachtel (yps), aret (bruno), cup, and the mRNA of osk. In the sponge body, forms a ribonucleoprotein complex (RNP) containing at least me31B, exu, yps and the mRNA of osk; interactions with exu and yps are RNA dependent.

Its subcellular location is the cytoplasm. The protein localises to the cytoplasmic ribonucleoprotein granule. Ensures the proper localization of the mRNA of the bicoid gene to the anterior regions of the oocyte thus playing a fundamental role in the establishment of the polarity of the oocyte. May bind the bcd mRNA. The polypeptide is Maternal protein exuperantia (exu) (Drosophila melanogaster (Fruit fly)).